The primary structure comprises 262 residues: Ornithine carbamoyltransferase (262 aa).

Carbamoyl phosphate contacts are provided by residues 3–7, Q30, R54, and 81–84; these read STRTR and HPTQ. L-ornithine contacts are provided by residues N114, D178, and 182–183; that span reads SM. Carbamoyl phosphate-binding positions include 219-222 and T247; that span reads HCLP.

The protein belongs to the aspartate/ornithine carbamoyltransferase superfamily. OTCase family.

The protein localises to the cytoplasm. The catalysed reaction is carbamoyl phosphate + L-ornithine = L-citrulline + phosphate + H(+). It participates in amino-acid biosynthesis; L-arginine biosynthesis; L-arginine from L-ornithine and carbamoyl phosphate: step 1/3. In terms of biological role, reversibly catalyzes the transfer of the carbamoyl group from carbamoyl phosphate (CP) to the N(epsilon) atom of ornithine (ORN) to produce L-citrulline. The sequence is that of Ornithine carbamoyltransferase (argF) from Neisseria lactamica.